Reading from the N-terminus, the 388-residue chain is Phosphopentomutase (388 aa).

Residues Asp-11, Asp-283, His-288, Asp-324, His-325, and His-336 each coordinate Mn(2+).

Belongs to the phosphopentomutase family. The cofactor is Mn(2+).

Its subcellular location is the cytoplasm. It carries out the reaction 2-deoxy-alpha-D-ribose 1-phosphate = 2-deoxy-D-ribose 5-phosphate. The enzyme catalyses alpha-D-ribose 1-phosphate = D-ribose 5-phosphate. It functions in the pathway carbohydrate degradation; 2-deoxy-D-ribose 1-phosphate degradation; D-glyceraldehyde 3-phosphate and acetaldehyde from 2-deoxy-alpha-D-ribose 1-phosphate: step 1/2. Its function is as follows. Isomerase that catalyzes the conversion of deoxy-ribose 1-phosphate (dRib-1-P) and ribose 1-phosphate (Rib-1-P) to deoxy-ribose 5-phosphate (dRib-5-P) and ribose 5-phosphate (Rib-5-P), respectively. The chain is Phosphopentomutase from Enterococcus faecalis (strain ATCC 700802 / V583).